The chain runs to 1210 residues: A disintegrin and metalloproteinase with thrombospondin motifs 19 (1210 aa).

The N-terminal stretch at 1–30 (MGPEMRLTRICCCCCLLYQLGFLSHGTTSG) is a signal peptide. Residues 31–319 (LQLTPDLEEW…KIADNRREKR (289 aa)) constitute a propeptide that is removed on maturation. Asn-54 is a glycosylation site (N-linked (GlcNAc...) asparagine). The tract at residues 55–166 (ATGLSGGSSD…PAQQEEPSAE (112 aa)) is disordered. The segment covering 69 to 78 (RSSGGGGRGQ) has biased composition (gly residues). Over residues 84-98 (REVRSVARAPQEEAT) the composition is skewed to basic and acidic residues. The span at 113–122 (GAEDEEELES) shows a compositional bias: acidic residues. Residues 130 to 139 (SGDTALSSGT) show a composition bias toward polar residues. Pro residues predominate over residues 143–158 (WQPPLPPQRPSSPPPA). Asn-263 carries an N-linked (GlcNAc...) asparagine glycan. The Cysteine switch motif lies at 295 to 302 (HHCGVISD). Cys-297 lines the Zn(2+) pocket. Positions 328-548 (YNIETVVVAD…KASSCLLHTD (221 aa)) constitute a Peptidase M12B domain. 11 cysteine pairs are disulfide-bonded: Cys-404-Cys-469, Cys-444-Cys-451, Cys-463-Cys-543, Cys-502-Cys-527, Cys-572-Cys-596, Cys-583-Cys-604, Cys-591-Cys-623, Cys-617-Cys-628, Cys-648-Cys-683, Cys-652-Cys-688, and Cys-663-Cys-673. His-485 provides a ligand contact to Zn(2+). Glu-486 is a catalytic residue. Zn(2+) contacts are provided by His-489 and His-495. The Disintegrin domain occupies 549 to 636 (PQSLSSVLVP…ECTRRTPAPE (88 aa)). In terms of domain architecture, TSP type-1 1 spans 637–689 (HLAGEWSPWSSCSRSCSSGVSSRERKCPGLGSEARDCNGPRKQYRICENPPCP). The interval 794–917 (VIKGDFNHTR…PDNQSSKEPG (124 aa)) is spacer. Asn-800, Asn-910, Asn-931, Asn-952, and Asn-1012 each carry an N-linked (GlcNAc...) asparagine glycan. TSP type-1 domains follow at residues 918 to 978 (PLFM…NEQP), 979 to 1040 (CQTR…QDCM), 1042 to 1086 (VWEA…EDCE), and 1090 to 1147 (KCYV…QPCN). Intrachain disulfides connect Cys-991/Cys-1034, Cys-995/Cys-1039, and Cys-1006/Cys-1023. The PLAC domain maps to 1163–1202 (LTFKCLGDQWPVYCRVIREKNLCQDMRWYQRCCETCRDFY).

Zn(2+) is required as a cofactor. The precursor is cleaved by a furin endopeptidase. In terms of processing, glycosylated. Can be O-fucosylated by POFUT2 on a serine or a threonine residue found within the consensus sequence C1-X(2)-(S/T)-C2-G of the TSP type-1 repeat domains where C1 and C2 are the first and second cysteine residue of the repeat, respectively. Fucosylated repeats can then be further glycosylated by the addition of a beta-1,3-glucose residue by the glucosyltransferase, B3GALTL. Fucosylation mediates the efficient secretion of ADAMTS family members. Can also be C-glycosylated with one or two mannose molecules on tryptophan residues within the consensus sequence W-X-X-W of the TPRs, and N-glycosylated. These other glycosylations can also facilitate secretion. In terms of tissue distribution, expressed predominantly in fetal ovary, low levels of expression is also detected in kidney, heart, skeletal muscle, lung and testis.

It is found in the secreted. The protein localises to the extracellular space. It localises to the extracellular matrix. In Mus musculus (Mouse), this protein is A disintegrin and metalloproteinase with thrombospondin motifs 19 (Adamts19).